The chain runs to 1025 residues: Multidrug resistance protein MdtC (1025 aa).

12 helical membrane passes run 3 to 23 (FFALFIYRPVATILLSVAITL), 333 to 353 (EVEQTLIISVALVILVVFLFL), 360 to 380 (IIPAVSVPVSLIGTFAAMYLC), 387 to 407 (LSLMALTIATGFVVDDAIVVL), 431 to 451 (VGFTVLSMSLSLVAVFLPLLL), 463 to 483 (FAVTLSVAIGISLLVSLTLTP), 528 to 548 (LVGVVLLGTIALNIWLYISIP), 853 to 873 (VILIIAAIATVYIVLGILYES), 875 to 895 (VHPLTILSTLPSAGVGALLAL), 897 to 917 (LFNAPFSLIALIGIMLLIGIV), 953 to 973 (PIMMTTLAALFGALPLVLSGG), and 984 to 1004 (ITIVGGLVMSQLLTLYTTPVV).

It belongs to the resistance-nodulation-cell division (RND) (TC 2.A.6) family. MdtC subfamily. As to quaternary structure, part of a tripartite efflux system composed of MdtA, MdtB and MdtC. MdtC forms a heteromultimer with MdtB.

The protein resides in the cell inner membrane. Its function is as follows. The MdtABC tripartite complex confers resistance against novobiocin and deoxycholate. The chain is Multidrug resistance protein MdtC from Escherichia coli (strain K12 / MC4100 / BW2952).